A 342-amino-acid polypeptide reads, in one-letter code: MSISIEQAIIHEISQDSQGQMRCRLRPQPLLNTHAVETMLEELHQTYSGKAGKGFGFFGTHGDDGEANSEFSDALTGYRKGDLGFVEFSGQASQLLQQELAKYDFSQGGFLLMSCYTSMTSDYLFVALLSAKSSMTVLDDMELSQNNHLDLNNIQLAARIDLTEWQADKSSRKYISFIRGRAGRKVADFFLDFMGCVEGVNTKAQNKTLIHAVEDFVAGSELTKDERQDCRNKVFEYCSERADAGEVIEVKDLADELADSGMDSFYDFACGGSYELDEEFPADKASLRSLKKFSGTGGGVTLSFDGGHLGERVIYDPISDTILIKGVPANLKDQLDRRLKGE.

This sequence belongs to the YejK family.

The protein resides in the cytoplasm. It is found in the nucleoid. The sequence is that of Nucleoid-associated protein Sfri_2491 from Shewanella frigidimarina (strain NCIMB 400).